A 480-amino-acid polypeptide reads, in one-letter code: Alpha,alpha-trehalose-phosphate synthase [UDP-forming] 2 (480 aa).

2 residues coordinate D-glucose 6-phosphate: tyrosine 97 and aspartate 151. 2 residues coordinate UDP: arginine 288 and lysine 293. UDP-alpha-D-glucose is bound by residues arginine 288 and lysine 293. Arginine 326 serves as a coordination point for D-glucose 6-phosphate. 387-395 (DGMNLVSFE) contributes to the UDP-alpha-D-glucose binding site. Residue 391–395 (LVSFE) coordinates UDP.

The protein belongs to the glycosyltransferase 20 family.

The enzyme catalyses D-glucose 6-phosphate + UDP-alpha-D-glucose = alpha,alpha-trehalose 6-phosphate + UDP + H(+). It functions in the pathway carbohydrate biosynthesis. Synthase catalytic subunit of the trehalose synthase complex that catalyzes the production of trehalose from glucose-6-phosphate and UDP-alpha-D-glucose in a two step process. This Aspergillus niger protein is Alpha,alpha-trehalose-phosphate synthase [UDP-forming] 2.